The following is a 357-amino-acid chain: Protein-L-isoaspartate O-methyltransferase domain-containing protein 1 (357 aa).

The N-myristoyl glycine moiety is linked to residue G2. Residue S64 is part of the active site. AdoMet binding motif stretches follow at residues 85–94 (LNLGSGTGYL), 160–164 (YDRIY), and 181–191 (LKVGGILVMPI). The segment at 240–250 (VRNLQDLARIY) is BC-box. Residues 299–331 (PLDSEEDEKMEEDSKEEEEKEHIEAMKREEPPQ) are disordered. Residues 301-317 (DSEEDEKMEEDSKEEEE) show a composition bias toward acidic residues. Residues 318-331 (KEHIEAMKREEPPQ) show a composition bias toward basic and acidic residues. The interval 341-344 (LPLP) is CUL-box.

Belongs to the methyltransferase superfamily. L-isoaspartyl/D-aspartyl protein methyltransferase family. In terms of assembly, component of the probable ECS(PCMTD1) E3 ubiquitin-protein ligase complex, at least composed of CUL5, ELOB, ELOC, RBX2 and PCMTD1. Interacts (via the BC-box) with ELOB and ELOC; the interaction is direct and stabilizes PCMTD1.

The protein localises to the cytoplasm. It localises to the membrane. Its function is as follows. Substrate recognition component of an ECS (Elongin BC-CUL5-SOCS-box protein) E3 ubiquitin ligase complex which mediates the ubiquitination and subsequent proteasomal degradation of target proteins. Specifically binds to the methyltransferase cofactor S-adenosylmethionine (AdoMet) via the N-terminal AdoMet binding motif, but does not display methyltransferase activity. May provide an alternate maintenance pathway for modified proteins by acting as a damage-specific E3 ubiquitin ligase adaptor protein. This Mus musculus (Mouse) protein is Protein-L-isoaspartate O-methyltransferase domain-containing protein 1 (Pcmtd1).